The following is a 394-amino-acid chain: 1-deoxy-D-xylulose 5-phosphate reductoisomerase (394 aa).

The NADPH site is built by T13, G14, S15, V16, R40, Q41, and N127. Residue K128 participates in 1-deoxy-D-xylulose 5-phosphate binding. NADPH is bound at residue E129. D153 contacts Mn(2+). 1-deoxy-D-xylulose 5-phosphate is bound by residues S154, E155, S184, and H207. E155 contacts Mn(2+). G213 provides a ligand contact to NADPH. Residues S220, N225, K226, and E229 each contribute to the 1-deoxy-D-xylulose 5-phosphate site. E229 lines the Mn(2+) pocket.

This sequence belongs to the DXR family. Requires Mg(2+) as cofactor. It depends on Mn(2+) as a cofactor.

It carries out the reaction 2-C-methyl-D-erythritol 4-phosphate + NADP(+) = 1-deoxy-D-xylulose 5-phosphate + NADPH + H(+). It functions in the pathway isoprenoid biosynthesis; isopentenyl diphosphate biosynthesis via DXP pathway; isopentenyl diphosphate from 1-deoxy-D-xylulose 5-phosphate: step 1/6. Catalyzes the NADPH-dependent rearrangement and reduction of 1-deoxy-D-xylulose-5-phosphate (DXP) to 2-C-methyl-D-erythritol 4-phosphate (MEP). The polypeptide is 1-deoxy-D-xylulose 5-phosphate reductoisomerase (Chromobacterium violaceum (strain ATCC 12472 / DSM 30191 / JCM 1249 / CCUG 213 / NBRC 12614 / NCIMB 9131 / NCTC 9757 / MK)).